The sequence spans 763 residues: Endoplasmic reticulum membrane sensor NFE2L1 (763 aa).

The chain crosses the membrane as a helical; Signal-anchor for type II membrane protein span at residues 7–24; the sequence is YLTEGLLQFTILLSLIGV. The tract at residues 108 to 150 is disordered; sequence DPEGSVSGSQPSSGLALESSSGLQDVTGPDNGVRESETEQGFS. A compositionally biased stretch (low complexity) spans 116–131; the sequence is SQPSSGLALESSSGLQ. The segment at 180–188 is cholesterol recognition/amino acid consensus (CRAC) region; it reads IFDYSHRQK. 2 N-linked (GlcNAc...) asparagine glycosylation sites follow: Asn338 and Asn350. Residues 369 to 373 form a CPD region; it reads SPEVE. N-linked (GlcNAc...) asparagine glycosylation occurs at Asn413. Disordered regions lie at residues 460-523 and 585-604; these read EEEF…DSET and TLKK…QMSR. The short motif at 466 to 470 is the Destruction motif element; the sequence is DSGLS. Over residues 466 to 514 the composition is skewed to low complexity; it reads DSGLSLDSSHSPSSLSSSEGSSSSSSSSSSSSSSSASSSASSSFSEEGA. Ser519 is modified (phosphoserine; by CK2). A compositionally biased stretch (basic and acidic residues) spans 589–604; that stretch reads GSKEKQADFLDKQMSR. Ser590 carries the post-translational modification Phosphoserine; by PKA. A bZIP domain is found at 645-708; that stretch reads LIRDIRRRGK…RQMKQKVQSL (64 aa). The tract at residues 647 to 666 is basic motif; it reads RDIRRRGKNKMAAQNCRKRK. The tract at residues 673–687 is leucine-zipper; sequence LERDVEDLQRDKARL. Residues 752–759 carry the Nuclear localization signal motif; that stretch reads RRQERKPK.

This sequence belongs to the bZIP family. CNC subfamily. As to quaternary structure, interacts with KEAP1. Interacts (via CPD region) with FBXW7; leading to its ubiquitination and degradation. Interacts with SYVN1/HRD1; leading to its ubiquitination and degradation. Interacts (when ubiquitinated) with DDI2; leading to its cleavage. In terms of assembly, interacts (via the bZIP domain) with small MAF protein (MAFF, MAFG or MAFK); required for binding to antioxidant response elements (AREs) on DNA. Interacts (via Destruction motif) with BTRC; leading to its ubiquitination and degradation. Interacts with CEBPB; the heterodimer represses expression of DSPP during odontoblast differentiation. Interacts with MOTS-c, a peptide produced by the mitochondrially encoded 12S rRNA MT-RNR1. Cleaved at Leu-104 by the aspartyl protease DDI2 following retrotranslocation, releasing the protein from the endoplasmic reticulum membrane and forming the transcription factor NRF1 that translocates into the nucleus. Ubiquitination is prerequisite for cleavage by aspartyl protease DDI2. Post-translationally, N-glycosylated in normal conditions, when it has a single-pass type II membrane protein topology, with the DNA-binding domain facing the endoplasmic reticulum lumen. Deglycosylated during retrotranslocation to the cytosolic side of the membrane, to have a single-pass type III membrane protein topology with the major part of the protein facing the cytosol. In terms of processing, ubiquitinated by the SCF(FBXW7) complex and SYVN1/HRD1, leading to its degradation by the proteasome. Ubiquitinated during retrotranslocation to the cytosolic side of the membrane: ubiquitination does not lead to degradation and is required for processing by the aspartyl protease DDI2 and subsequent release from the endoplasmic reticulum membrane. Phosphorylation by CK2 at Ser-519 inhibits transcription factor activity, possibly by affecting DNA-binding activity. Phosphorylation at Ser-590 is required for interaction with CEBPB. Post-translationally, ubiquitinated by the SCF(BTRC) complex in the nucleus, leading to its degradation by the proteasome.

It localises to the endoplasmic reticulum membrane. The protein localises to the nucleus. Functionally, endoplasmic reticulum membrane sensor that translocates into the nucleus in response to various stresses to act as a transcription factor. Constitutes a precursor of the transcription factor NRF1. Able to detect various cellular stresses, such as cholesterol excess, oxidative stress or proteasome inhibition. In response to stress, it is released from the endoplasmic reticulum membrane following cleavage by the protease DDI2 and translocates into the nucleus to form the transcription factor NRF1. Acts as a key sensor of cholesterol excess: in excess cholesterol conditions, the endoplasmic reticulum membrane form of the protein directly binds cholesterol via its CRAC motif, preventing cleavage and release of the transcription factor NRF1, thereby allowing expression of genes promoting cholesterol removal, such as CD36. Involved in proteasome homeostasis: in response to proteasome inhibition, it is released from the endoplasmic reticulum membrane, translocates to the nucleus and activates expression of genes encoding proteasome subunits. In terms of biological role, CNC-type bZIP family transcription factor that translocates to the nucleus and regulates expression of target genes in response to various stresses. Heterodimerizes with small-Maf proteins (MAFF, MAFG or MAFK) and binds DNA motifs including the antioxidant response elements (AREs), which regulate expression of genes involved in oxidative stress response. Activates or represses expression of target genes, depending on the context. Plays a key role in cholesterol homeostasis by acting as a sensor of cholesterol excess: in low cholesterol conditions, translocates into the nucleus and represses expression of genes involved in defense against cholesterol excess, such as CD36. In excess cholesterol conditions, the endoplasmic reticulum membrane form of the protein directly binds cholesterol via its CRAC motif, preventing cleavage and release of the transcription factor NRF1, thereby allowing expression of genes promoting cholesterol removal. Critical for redox balance in response to oxidative stress: acts by binding the AREs motifs on promoters and mediating activation of oxidative stress response genes, such as GCLC, GCLM, GSS, MT1 and MT2. Plays an essential role during fetal liver hematopoiesis: probably has a protective function against oxidative stress and is involved in lipid homeostasis in the liver. Involved in proteasome homeostasis: in response to proteasome inhibition, mediates the 'bounce-back' of proteasome subunits by translocating into the nucleus and activating expression of genes encoding proteasome subunits. Also involved in regulating glucose flux. Together with CEBPB; represses expression of DSPP during odontoblast differentiation. In response to ascorbic acid induction, activates expression of SP7/Osterix in osteoblasts. The chain is Endoplasmic reticulum membrane sensor NFE2L1 from Bos taurus (Bovine).